The following is a 456-amino-acid chain: tRNA modification GTPase MnmE (456 aa).

Arginine 24, glutamate 81, and lysine 120 together coordinate (6S)-5-formyl-5,6,7,8-tetrahydrofolate. Positions 216–379 constitute a TrmE-type G domain; sequence GMTVVIAGRP…LRDHLKACMG (164 aa). Asparagine 226 is a K(+) binding site. Residues 226-231, 245-251, 270-273, and 335-338 contribute to the GTP site; these read NAGKSS, TEIAGTT, DTAG, and NKAD. Serine 230 serves as a coordination point for Mg(2+). Positions 245, 247, and 250 each coordinate K(+). Residue threonine 251 coordinates Mg(2+). Lysine 456 serves as a coordination point for (6S)-5-formyl-5,6,7,8-tetrahydrofolate.

Belongs to the TRAFAC class TrmE-Era-EngA-EngB-Septin-like GTPase superfamily. TrmE GTPase family. As to quaternary structure, homodimer. Heterotetramer of two MnmE and two MnmG subunits. Requires K(+) as cofactor.

The protein localises to the cytoplasm. Exhibits a very high intrinsic GTPase hydrolysis rate. Involved in the addition of a carboxymethylaminomethyl (cmnm) group at the wobble position (U34) of certain tRNAs, forming tRNA-cmnm(5)s(2)U34. This Pseudomonas fluorescens (strain Pf0-1) protein is tRNA modification GTPase MnmE.